A 532-amino-acid chain; its full sequence is Collagen alpha-1(XXIII) chain (532 aa).

The Cytoplasmic portion of the chain corresponds to 1 to 23 (MGAGERAAGGGGTQDPGAGCGAR). Residues 24-45 (ALGALCLLLSVGSATACLLLGA) form a helical; Signal-anchor for type II membrane protein membrane-spanning segment. The Extracellular portion of the chain corresponds to 46-532 (QAAALHGRVA…GLPVPGCWHK (487 aa)). Residues 102-532 (PSECICPPGP…GLPVPGCWHK (431 aa)) are disordered. Collagen-like domains follow at residues 108–163 (PPGP…FGPR), 173–232 (GPPG…PGKK), 242–297 (GLPG…EQGD), and 313–372 (GPPG…MGLS). Composition is skewed to low complexity over residues 129–145 (QSGRDGYPGPLGLDGKP) and 157–172 (PGDFGPRGAQGQDGAA). 3 stretches are compositionally biased toward pro residues: residues 174–184 (PPGPPGPPGAR), 241–250 (PGLPGPPGPK), and 314–326 (PPGPQGAPGPPGI). Composition is skewed to basic and acidic residues over residues 342–354 (DGEKGPKGPKGDP) and 380–393 (PKGEKGESASDHLQ). Residues 403–414 (PGPPGPPGPPGP) are compositionally biased toward pro residues. 2 Collagen-like domains span residues 404-452 (GPPG…GPPG) and 455-514 (GLPG…PGLD). 2 stretches are compositionally biased toward basic and acidic residues: residues 427-441 (DGAKGEKGASGERGP) and 478-495 (RGEKGDRSERGEKGERGV).

In terms of assembly, homotrimer. In terms of processing, undergoes proteolytic cleavage by furin protease to yield a 60 kDa soluble form that forms a homotrimer and exhibits a low affinity interaction with heparin.

The protein resides in the cell membrane. This chain is Collagen alpha-1(XXIII) chain (Col23a1), found in Rattus norvegicus (Rat).